Reading from the N-terminus, the 91-residue chain is UPF0358 protein SAS1047 (91 aa).

This sequence belongs to the UPF0358 family.

The polypeptide is UPF0358 protein SAS1047 (Staphylococcus aureus (strain MSSA476)).